The sequence spans 233 residues: Homeobox protein ceh-30 (233 aa).

The segment covering 50-85 (NNSTYSHDLDPSPQSVRSDLSTSPRASSPDRNSPMS) has biased composition (polar residues). Disordered stretches follow at residues 50–93 (NNST…KART) and 206–233 (FQAT…SNSD). A DNA-binding region (homeobox) is located at residues 88-147 (SRKARTIFTDKQLQELENTFEKQKYLSVQDRMDLAHRMGLSDTQVKTWYQNRRTKWKRQA). A compositionally biased stretch (polar residues) spans 224-233 (PQLDVSSNSD).

It localises to the nucleus. Functionally, cell-type specific anti-apoptotic transcription factor required for the sexually dimorphic survival of the male-specific CEM (cephalic male) sensory neurons during sex determination. In hermaphrodites, the homologous cells undergo programmed cell death due to transcriptional repression of ceh-30 by tra-1, the terminal regulator in the sex determination pathway. This is Homeobox protein ceh-30 from Caenorhabditis briggsae.